Consider the following 154-residue polypeptide: Transcriptional repressor NrdR (154 aa).

Residues 3–34 (CPFCRHPDSRVVDSRETDEGQAIRRRRSCPEC) fold into a zinc finger. One can recognise an ATP-cone domain in the interval 46-136 (LAVVKRSGVT…VYRSFESAAD (91 aa)).

The protein belongs to the NrdR family. Zn(2+) is required as a cofactor.

Functionally, negatively regulates transcription of bacterial ribonucleotide reductase nrd genes and operons by binding to NrdR-boxes. The chain is Transcriptional repressor NrdR from Mycobacterium sp. (strain JLS).